The sequence spans 311 residues: T-cell immunomodulatory protein (311 aa).

N-linked (GlcNAc...) asparagine glycans are attached at residues asparagine 52, asparagine 70, and asparagine 181. Residues 266-286 (VLLTAIALIGVCVFILAIIGI) form a helical membrane-spanning segment.

The protein belongs to the TIP family. In terms of assembly, interacts with RUVBL1, RUVBL2 and alpha-tubulin.

It localises to the secreted. The protein resides in the cell membrane. Its function is as follows. Modulator of T-cell function. Has a protective effect in graft versus host disease model. The sequence is that of T-cell immunomodulatory protein from Macaca fascicularis (Crab-eating macaque).